A 488-amino-acid chain; its full sequence is Monodehydroascorbate reductase 4, peroxisomal (488 aa).

At 1–3 (MGR) the chain is on the cytoplasmic side. The chain crosses the membrane as a helical span at residues 4-24 (AFVYVILGGGVAAGYAALEFT). FAD-binding positions include 12-15 (GGVA), E39, R46, K51, and 145-146 (RD). The Peroxisomal segment spans residues 25–458 (RRGVSDGELC…SASVVMIKKP (434 aa)). NAD(+) is bound by residues 170–176 (GGYIGME), E194, R200, and G259. 172–176 (YIGME) contacts NADP(+). Positions 200 and 259 each coordinate NADP(+). D296 contacts FAD. 312–313 (EH) is an NAD(+) binding site. NADP(+) is bound at residue 312–313 (EH). FAD is bound at residue V314. An L-ascorbate-binding site is contributed by R318. Y344 is a binding site for FAD. Y344 lines the NAD(+) pocket. Y344 contacts NADP(+). R346 contributes to the L-ascorbate binding site. Residues 459-479 (LYVWHAATGVVVAASVAAFAF) form a helical membrane-spanning segment. Residues 480-488 (WYGRRRRRW) are Cytoplasmic-facing.

This sequence belongs to the FAD-dependent oxidoreductase family. Requires FAD as cofactor.

Its subcellular location is the peroxisome membrane. It carries out the reaction 2 monodehydro-L-ascorbate radical + NADH + H(+) = 2 L-ascorbate + NAD(+). Its function is as follows. Catalyzes the conversion of monodehydroascorbate to ascorbate, oxidizing NADH in the process. Involved in the detoxification of H(2)O(2) that escapes the peroxisome and causes oxidative damage to oil bodies. The sequence is that of Monodehydroascorbate reductase 4, peroxisomal from Arabidopsis thaliana (Mouse-ear cress).